The sequence spans 116 residues: Iron-sulfur cluster insertion protein ErpA (116 aa).

Iron-sulfur cluster contacts are provided by cysteine 44, cysteine 108, and cysteine 110.

Belongs to the HesB/IscA family. Homodimer. It depends on iron-sulfur cluster as a cofactor.

Required for insertion of 4Fe-4S clusters for at least IspG. This chain is Iron-sulfur cluster insertion protein ErpA, found in Pseudomonas fluorescens (strain Pf0-1).